Here is a 30-residue protein sequence, read N- to C-terminus: Cycloviolacin-O18 (30 aa).

A cross-link (cyclopeptide (Gly-Asn)) is located at residues 1–30 (GIPCGESCVYIPCTVTALAGCKCKSKVCYN). Cystine bridges form between cysteine 4-cysteine 21, cysteine 8-cysteine 23, and cysteine 13-cysteine 28.

Post-translationally, this is a cyclic peptide. In terms of tissue distribution, expressed in leaves, petals and petioles but not in roots and runners (at protein level).

Probably participates in a plant defense mechanism. In Viola odorata (Sweet violet), this protein is Cycloviolacin-O18.